Here is a 102-residue protein sequence, read N- to C-terminus: Antimicrobial peptide 1 (102 aa).

The first 26 residues, 1-26 (MASTKLFFSVITVMMLIAMASEMVNG), serve as a signal peptide directing secretion. Cystine bridges form between cysteine 37–cysteine 90, cysteine 47–cysteine 102, and cysteine 49–cysteine 75.

The protein localises to the secreted. Antimicrobial peptide which inhibits the growth of a variety of fungi, oomycetes, Gram-positive bacterial phytopatogenes and S.cerevisiae in vitro. No activity against E.coli. The sequence is that of Antimicrobial peptide 1 from Macadamia integrifolia (Macadamia nut).